The chain runs to 687 residues: Triadin (687 aa).

Topologically, residues 1–47 (MTEITAEGNASITTTVIDNKNGSVPKSPGKVLKRTVTEDIVTTFSSP) are cytoplasmic. A helical membrane pass occupies residues 48 to 68 (AAWLLVIALIITWSAVAIVMF). Over 69–687 (DLVDYKNFSA…NSPGQKQQEQ (619 aa)) the chain is Lumenal. Residues 117–130 (DGDEDDEDADEDID) are compositionally biased toward acidic residues. 3 disordered regions span residues 117–265 (DGDE…EQKD), 280–643 (GDLK…QKSP), and 660–687 (FQFP…QQEQ). Basic and acidic residues predominate over residues 131 to 265 (KGEIEEPPLK…PAVPKHEQKD (135 aa)). A compositionally biased stretch (polar residues) spans 295 to 306 (LTASRPALSTPS). 2 positions are modified to phosphoserine: S303 and S306. A compositionally biased stretch (basic and acidic residues) spans 307–356 (LEEKEKEEKKKVEKKVTSDTKKKEKGEAKKKSEKETVIDGKGKEPGKPPE). Residues 357–370 (TKQTTTKLTTQAAA) are compositionally biased toward low complexity. Basic and acidic residues-rich tracts occupy residues 371 to 390 (TKDE…EEKP), 396 to 431 (EKKE…KEEI), 442 to 459 (GKKE…DVKP), and 466 to 501 (LKKE…KEAK). N514 carries an N-linked (GlcNAc...) asparagine glycan. Composition is skewed to basic and acidic residues over residues 539 to 583 (TAEK…KVPP) and 594 to 630 (TRAE…DKEV). Composition is skewed to polar residues over residues 631–643 (TNNV…QKSP) and 667–687 (VQHS…QQEQ).

In terms of assembly, homooligomer of variable subunit number; disulfide-linked. Interacts with CASQ1 in skeletal muscle. Interacts with CASQ2. Interacts with RYR1 in skeletal muscle. Post-translationally, phosphorylated by CaMK2. N-glycosylated. Detected in skeletal muscle (at protein level). Detected in skeletal muscle.

Its subcellular location is the sarcoplasmic reticulum membrane. The protein localises to the microsome. It localises to the cell membrane. The protein resides in the sarcolemma. Contributes to the regulation of lumenal Ca2+ release via the sarcoplasmic reticulum calcium release channels RYR1 and RYR2, a key step in triggering skeletal and heart muscle contraction. Required for normal organization of the triad junction, where T-tubules and the sarcoplasmic reticulum terminal cisternae are in close contact. Required for normal skeletal muscle strength. Plays a role in excitation-contraction coupling in the heart and in regulating the rate of heart beats. The polypeptide is Triadin (Rattus norvegicus (Rat)).